A 151-amino-acid polypeptide reads, in one-letter code: Small ribosomal subunit protein uS11A (151 aa).

A disordered region spans residues 131–151; the sequence is DVTPIPSDSTRRKGGRRGRRL. Positions 142 to 151 are enriched in basic residues; it reads RKGGRRGRRL.

This sequence belongs to the universal ribosomal protein uS11 family.

The polypeptide is Small ribosomal subunit protein uS11A (Drosophila melanogaster (Fruit fly)).